The sequence spans 202 residues: Glycerol-3-phosphate acyltransferase (202 aa).

Transmembrane regions (helical) follow at residues 3 to 23 (NLII…LILA), 87 to 107 (LLWS…YLLF), 118 to 138 (GAMI…WVVI), 144 to 164 (ISSL…FIFN), and 167 to 187 (LEIH…YKHL).

The protein belongs to the PlsY family. As to quaternary structure, probably interacts with PlsX.

It localises to the cell inner membrane. The enzyme catalyses an acyl phosphate + sn-glycerol 3-phosphate = a 1-acyl-sn-glycero-3-phosphate + phosphate. Its pathway is lipid metabolism; phospholipid metabolism. Catalyzes the transfer of an acyl group from acyl-phosphate (acyl-PO(4)) to glycerol-3-phosphate (G3P) to form lysophosphatidic acid (LPA). This enzyme utilizes acyl-phosphate as fatty acyl donor, but not acyl-CoA or acyl-ACP. The chain is Glycerol-3-phosphate acyltransferase from Campylobacter jejuni subsp. jejuni serotype O:2 (strain ATCC 700819 / NCTC 11168).